The primary structure comprises 320 residues: N-acetylneuraminate lyase (320 aa).

The aceneuramate site is built by Thr-51 and Thr-52. Tyr-143 functions as the Proton donor in the catalytic mechanism. The active-site Schiff-base intermediate with substrate is the Lys-173. Aceneuramate-binding residues include Thr-175, Gly-199, Asp-201, Glu-202, and Ser-218. Ser-308 carries the phosphoserine modification.

The protein belongs to the DapA family. NanA subfamily. As to quaternary structure, homotetramer.

It localises to the cytoplasm. It catalyses the reaction aceneuramate = aldehydo-N-acetyl-D-mannosamine + pyruvate. It functions in the pathway amino-sugar metabolism; N-acetylneuraminate degradation. Catalyzes the cleavage of N-acetylneuraminic acid (sialic acid) to form pyruvate and N-acetylmannosamine via a Schiff base intermediate. It prevents sialic acids from being recycled and returning to the cell surface. Involved in the N-glycolylneuraminic acid (Neu5Gc) degradation pathway. The polypeptide is N-acetylneuraminate lyase (Mus musculus (Mouse)).